Reading from the N-terminus, the 414-residue chain is Cytochrome c biogenesis protein Ccs1 (414 aa).

3 consecutive transmembrane segments (helical) span residues 14 to 34, 73 to 93, and 159 to 179; these read LTVAIIILLAIALASALGTVI, SWWFIFLIILLLLSLTLCTIT, and VSPIIVHFSLVIVLIGSMLST.

Belongs to the Ccs1/CcsB family. May interact with CcsA.

The protein localises to the plastid. It is found in the chloroplast thylakoid membrane. Its function is as follows. Required during biogenesis of c-type cytochromes (cytochrome c6 and cytochrome f) at the step of heme attachment. This Guillardia theta (Cryptophyte) protein is Cytochrome c biogenesis protein Ccs1.